The following is a 292-amino-acid chain: NAC domain-containing protein 105 (292 aa).

An NAC domain is found at 12 to 162; the sequence is IPPGFRFHPT…GWVVCRAFKK (151 aa). Residues 112–168 mediate DNA binding; it reads IGMRKTLVFYRGRAPNGQKSDWIIHEYYSLESHQNSPPQEEGWVVCRAFKKRTTIPT. The span at 237 to 259 shows a compositional bias: polar residues; sequence LPQLESPSLPSEITPHSTTFSEN. The segment at 237–269 is disordered; sequence LPQLESPSLPSEITPHSTTFSENSSRKDDMSSE. Residues 260–269 show a composition bias toward basic and acidic residues; the sequence is SSRKDDMSSE.

The protein belongs to the plant vascular related NAC-domain protein family. As to quaternary structure, interacts with NAC030/VND7. In terms of tissue distribution, detected in root protoxylem and metaxylem poles and in vessels of protoxylems, outermost metaxylems, inner metaxylems, shoots and hypocotyls. Expressed in roots, hypocotyls, cotyledons and leaves. Present in developing xylems. Present in root developing xylems. Specifically expressed in vessels but not in interfascicular fibers in stems.

The protein resides in the nucleus. Its function is as follows. Transcription activator that binds to the secondary wall NAC binding element (SNBE), 5'-(T/A)NN(C/T)(T/C/G)TNNNNNNNA(A/C)GN(A/C/T)(A/T)-3', in the promoter of target genes. Involved in xylem formation by promoting the expression of secondary wall-associated transcription factors and of genes involved in secondary wall biosynthesis and programmed cell death, genes driven by the secondary wall NAC binding element (SNBE). Triggers thickening of secondary walls. This chain is NAC domain-containing protein 105, found in Arabidopsis thaliana (Mouse-ear cress).